The chain runs to 578 residues: Proteasome-associated ATPase (578 aa).

Positions Thr-8–Gln-84 form a coiled coil. Gly-267–Leu-272 contacts ATP. The segment at Tyr-577–Leu-578 is docks into pockets in the proteasome alpha-ring.

This sequence belongs to the AAA ATPase family. In terms of assembly, homohexamer. Assembles into a hexameric ring structure that caps the 20S proteasome core. Strongly interacts with the prokaryotic ubiquitin-like protein Pup through a hydrophobic interface; the interacting region of ARC lies in its N-terminal coiled-coil domain. There is one Pup binding site per ARC hexamer ring. Upon ATP-binding, the C-terminus of ARC interacts with the alpha-rings of the proteasome core, possibly by binding to the intersubunit pockets.

The protein operates within protein degradation; proteasomal Pup-dependent pathway. ATPase which is responsible for recognizing, binding, unfolding and translocation of pupylated proteins into the bacterial 20S proteasome core particle. May be essential for opening the gate of the 20S proteasome via an interaction with its C-terminus, thereby allowing substrate entry and access to the site of proteolysis. Thus, the C-termini of the proteasomal ATPase may function like a 'key in a lock' to induce gate opening and therefore regulate proteolysis. The protein is Proteasome-associated ATPase of Kribbella flavida (strain DSM 17836 / JCM 10339 / NBRC 14399).